Consider the following 334-residue polypeptide: L-lactate dehydrogenase B chain (334 aa).

Residue 30–58 (GQVGMACAVSVLLKELADELALVDILEDK) coordinates NAD(+). Arginine 107, asparagine 139, and arginine 170 together coordinate substrate. Position 139 (asparagine 139) interacts with NAD(+). Histidine 194 functions as the Proton acceptor in the catalytic mechanism. Threonine 249 contacts substrate.

The protein belongs to the LDH/MDH superfamily. LDH family. In terms of assembly, homotetramer.

The protein localises to the cytoplasm. The enzyme catalyses (S)-lactate + NAD(+) = pyruvate + NADH + H(+). Its pathway is fermentation; pyruvate fermentation to lactate; (S)-lactate from pyruvate: step 1/1. Functionally, interconverts simultaneously and stereospecifically pyruvate and lactate with concomitant interconversion of NADH and NAD(+). This is L-lactate dehydrogenase B chain (ldhb) from Xenopus laevis (African clawed frog).